A 368-amino-acid polypeptide reads, in one-letter code: Putative F-box/kelch-repeat protein At5g02995 (368 aa).

The region spanning serine 35 to isoleucine 84 is the F-box domain. 2 Kelch repeats span residues aspartate 140 to lysine 186 and lysine 187 to glycine 233.

The chain is Putative F-box/kelch-repeat protein At5g02995 from Arabidopsis thaliana (Mouse-ear cress).